The chain runs to 384 residues: Succinyl-diaminopimelate desuccinylase (384 aa).

Zn(2+) is bound at residue His72. The active site involves Asp74. Zn(2+) is bound at residue Asp105. The Proton acceptor role is filled by Glu139. Glu140, Glu168, and His355 together coordinate Zn(2+).

The protein belongs to the peptidase M20A family. DapE subfamily. As to quaternary structure, homodimer. Zn(2+) serves as cofactor. Co(2+) is required as a cofactor.

The enzyme catalyses N-succinyl-(2S,6S)-2,6-diaminopimelate + H2O = (2S,6S)-2,6-diaminopimelate + succinate. The protein operates within amino-acid biosynthesis; L-lysine biosynthesis via DAP pathway; LL-2,6-diaminopimelate from (S)-tetrahydrodipicolinate (succinylase route): step 3/3. Its function is as follows. Catalyzes the hydrolysis of N-succinyl-L,L-diaminopimelic acid (SDAP), forming succinate and LL-2,6-diaminopimelate (DAP), an intermediate involved in the bacterial biosynthesis of lysine and meso-diaminopimelic acid, an essential component of bacterial cell walls. The polypeptide is Succinyl-diaminopimelate desuccinylase (Blochmanniella pennsylvanica (strain BPEN)).